Here is an 819-residue protein sequence, read N- to C-terminus: MAYRFIKWFEELRKEDVPLVGGKGANLGEMTNAGIPVPPGFCVTAEAYKYFVENVKISKEDVKRILGEKANKGTIAEVLAQAPDEPRPLQEWIMDIINRTNVDDSKQLQENTAVIRELIKSLDMPAEIADEIKQAYKELSQRFGKDEIYVAVRSSATAEDLPEASFAGQQETYLDVLGADDVIDKVKRCWASLWTARATFYRAKQGFDHSKVYLSAVVQKMVNSEKSGVMFTANPVTNNRNEIMINASWGLGEAVVSGAVTPDEYIVEKGTWKIKEKVIAKKEVMVIRNPETGKGTVTVKVAEYLGPEWVEKQVLTDEQIIEVAKMGQKIEEHYGWPQDIEWAYDKDDGKLYIVQSRPVTTLKETTTEEVEEVEEAEVILKGLGASPGIGAGRVVVIFDASEIDKVKEGDVLVTTMTNPDMVPAMKRAAAIITDEGGRTSHAAIVSRELGIPAVVGTKEATKKLKTGDYVTVDGTRGLVYKGIVKSLVEKKKKEEAAAAPGAAVAAAPLVTGTLVKVNVSMPEVAERAAATGADGVGLLRAEHMILSIGQHPVKFIKEGKEEELVEKLAEGIEKVAAAFYPRPVWYRTLDAPTNEFREMPGGEDEPEERNPMLGWRGIRRGLDQPELLRAEFKAIKKVVEKGYNNIGVMLPLVSHPEQIRKAKEIARSVGLEPHKDVAWGIMIEVPAAAIIIEDLIKEGIDFVSFGTNDLTQYTLAIDRDNERVAKLYDETHPAVLKLIKHVIKVCKRYGVETSICGQAGSDPKMARILVRLGIDSISANPDAVQLIRQVVAQEERKLMLEAARKRLFEEEEEEEEFLF.

Residue His-441 is the Tele-phosphohistidine intermediate of the active site. Positions 540, 587, 684, 706, 707, 708, and 709 each coordinate substrate. Position 684 (Glu-684) interacts with Mg(2+). Residue Asp-709 coordinates Mg(2+). Residue Cys-756 is the Proton donor of the active site.

The protein belongs to the PEP-utilizing enzyme family. Mg(2+) is required as a cofactor.

It catalyses the reaction pyruvate + ATP + H2O = phosphoenolpyruvate + AMP + phosphate + 2 H(+). It functions in the pathway carbohydrate biosynthesis; gluconeogenesis. In terms of biological role, catalyzes the phosphorylation of pyruvate to phosphoenolpyruvate. The protein is Probable phosphoenolpyruvate synthase (ppsA) of Pyrococcus abyssi (strain GE5 / Orsay).